The chain runs to 792 residues: Glucocorticoid receptor (792 aa).

Residues 1 to 15 (MDSKESLAPPGRDEV) show a composition bias toward basic and acidic residues. The interval 1-25 (MDSKESLAPPGRDEVPSSLLGRGRG) is disordered. The interval 1 to 436 (MDSKESLAPP…STATGPPPKL (436 aa)) is modulating. R24 carries the post-translational modification Omega-N-methylarginine. S46 is subject to Phosphoserine. Positions 67–98 (SKGSASNAQQQQQQQQQQQQQQQQQPQPDLSK) are disordered. The segment covering 75 to 94 (QQQQQQQQQQQQQQQQQPQP) has biased composition (low complexity). A phosphoserine mark is found at S131, S152, and S159. The span at 148 to 162 (NRSTSRPENPKSSTP) shows a compositional bias: polar residues. Residues 148–201 (NRSTSRPENPKSSTPAAGCATPTEKEFPQTHSDPSSEQQNRKSQPGTNGGSVKL) form a disordered region. Residue T168 is modified to Phosphothreonine. The span at 176–193 (QTHSDPSSEQQNRKSQPG) shows a compositional bias: polar residues. S221, S229, S243, and S284 each carry phosphoserine. Residues K294 and K310 each participate in a glycyl lysine isopeptide (Lys-Gly) (interchain with G-Cter in SUMO); alternate cross-link. Residues K294 and K310 each participate in a glycyl lysine isopeptide (Lys-Gly) (interchain with G-Cter in SUMO2); alternate cross-link. 2 positions are modified to phosphoserine: S324 and S421. The nuclear receptor DNA-binding region spans 434–509 (PKLCLVCSDE…AGMNLEARKT (76 aa)). Residue K435 forms a Glycyl lysine isopeptide (Lys-Gly) (interchain with G-Cter in ubiquitin) linkage. NR C4-type zinc fingers lie at residues 437-457 (CLVC…CGSC) and 473-497 (CAGR…YRKC). 4 positions are modified to N6-acetyllysine: K496, K508, K510, and K511. An interaction with CLOCK region spans residues 501 to 792 (GMNLEARKTK…NIKKLLFHQK (292 aa)). Positions 503 to 538 (NLEARKTKKKIKGIQQATAGVSQDTSENANKTIVPA) are hinge. The 235-residue stretch at 539–773 (ALPQLTPTLV…FPEMLAEIIT (235 aa)) folds into the NR LBD domain. Residues 547–712 (LVSLLEVIEP…EIRMTYIKEL (166 aa)) form an interaction with CRY1 region. K718 participates in a covalent cross-link: Glycyl lysine isopeptide (Lys-Gly) (interchain with G-Cter in SUMO).

It belongs to the nuclear hormone receptor family. NR3 subfamily. As to quaternary structure, heteromultimeric cytoplasmic complex with HSP90AA1, HSPA1A/HSPA1B, and FKBP5 or another immunophilin such as PPID, STIP1, or the immunophilin homolog PPP5C. Upon ligand binding FKBP5 dissociates from the complex and FKBP4 takes its place, thereby linking the complex to dynein and mediating transport to the nucleus, where the complex dissociates. Probably forms a complex composed of chaperones HSP90 and HSP70, co-chaperones CDC37, PPP5C, TSC1 and client protein TSC2, CDK4, AKT, RAF1 and NR3C1; this complex does not contain co-chaperones STIP1/HOP and PTGES3/p23. Directly interacts with UNC45A. Binds to DNA as a homodimer, and as heterodimer with NR3C2 or the retinoid X receptor. Binds STAT5A and STAT5B homodimers and heterodimers. Interacts with NRIP1, POU2F1, POU2F2 and TRIM28. Interacts with several coactivator complexes, including the SMARCA4 complex, CREBBP/EP300, TADA2L (Ada complex) and p160 coactivators such as NCOA2 and NCOA6. Interaction with BAG1 inhibits transactivation. Interacts with HEXIM1 and TGFB1I1. Interacts with NCOA1. Interacts with NCOA3, SMARCA4, SMARCC1, SMARCD1, and SMARCE1. Interacts with CLOCK, CRY1 and CRY2 in a ligand-dependent fashion. Interacts with CIART. Interacts with RWDD3. Interacts with UBE2I/UBC9 and this interaction is enhanced in the presence of RWDD3. Interacts with GRIP1. Interacts with NR4A3 (via nuclear receptor DNA-binding domain), represses transcription activity of NR4A3 on the POMC promoter Nur response element (NurRE). Directly interacts with PNRC2 to attract and form a complex with UPF1 and DCP1A; the interaction leads to rapid mRNA degradation. Interacts with GSK3B. Interacts with FNIP1 and FNIP2. Interacts (via C-terminus) with HNRNPU (via C-terminus). Interacts with MCM3AP. Interacts (via domain NR LBD) with HSP90AA1 and HSP90AB1. In the absence of hormonal ligand, interacts with TACC1. Interacts (via NR LBD domain) with ZNF764 (via KRAB domain); the interaction regulates transcription factor activity of NR3C1 by directing its actions toward certain biologic pathways. Post-translationally, acetylation by CLOCK reduces its binding to glucocorticoid response elements and its transcriptional activity. In terms of processing, increased proteasome-mediated degradation in response to glucocorticoids. Phosphorylated in the absence of hormone; becomes hyperphosphorylated in the presence of glucocorticoids. Phosphorylated in the absence of hormone; becomes hyperphosphorylated in the presence of glucocorticoid. The Ser-221, Ser-243 and Ser-421-phosphorylated forms are mainly cytoplasmic, and the Ser-229-phosphorylated form is nuclear. Phosphorylation at Ser-229 increases transcriptional activity. Phosphorylation at Ser-221, Ser-243 and Ser-421 decreases signaling capacity. Phosphorylation at Ser-421 may protect from glucocorticoid-induced apoptosis. Phosphorylation at Ser-221 and Ser-229 is not required in regulation of chromosome segregation. May be dephosphorylated by PPP5C, attenuates NR3C1 action. Post-translationally, sumoylation at Lys-294 and Lys-310 negatively regulates its transcriptional activity. Sumoylation at Lys-718 positively regulates its transcriptional activity in the presence of RWDD3. Sumoylation at Lys-294 and Lys-310 is dispensable whereas sumoylation at Lys-718 is critical for the stimulatory effect of RWDD3 on its transcriptional activity. Heat shock increases sumoylation in a RWDD3-dependent manner. In terms of processing, ubiquitinated. Ubiquitination by UBR5 leads to its degradation: UBR5 specifically recognizes and binds ligand-bound NR3C1 when it is not associated with coactivators (NCOAs). In presence of NCOAs, the UBR5-degron is not accessible, preventing its ubiquitination and degradation. As to expression, expressed in spleen, kidney and liver. Expressed in a circadian manner in the liver. Expressed at highest level in spleen with lesser amounts in kidney and liver.

It is found in the cytoplasm. The protein resides in the nucleus. It localises to the mitochondrion. The protein localises to the cytoskeleton. Its subcellular location is the spindle. It is found in the microtubule organizing center. The protein resides in the centrosome. It localises to the chromosome. The protein localises to the nucleoplasm. Its function is as follows. Receptor for glucocorticoids (GC). Has a dual mode of action: as a transcription factor that binds to glucocorticoid response elements (GRE), both for nuclear and mitochondrial DNA, and as a modulator of other transcription factors. Affects inflammatory responses, cellular proliferation and differentiation in target tissues. Involved in chromatin remodeling. Plays a role in rapid mRNA degradation by binding to the 5' UTR of target mRNAs and interacting with PNRC2 in a ligand-dependent manner which recruits the RNA helicase UPF1 and the mRNA-decapping enzyme DCP1A, leading to RNA decay. Could act as a coactivator for STAT5-dependent transcription upon growth hormone (GH) stimulation and could reveal an essential role of hepatic GR in the control of body growth. In terms of biological role, has transcriptional activation and repression activity. Mediates glucocorticoid-induced apoptosis. Promotes accurate chromosome segregation during mitosis. May act as a tumor suppressor. May play a negative role in adipogenesis through the regulation of lipolytic and antilipogenic gene expression. Acts as a dominant negative inhibitor of isoform 1. Has intrinsic transcriptional activity independent of isoform Alpha when both isoforms are coexpressed. Loses this transcription modulator function on its own. Has no hormone-binding activity. May play a role in controlling glucose metabolism by maintaining insulin sensitivity. Reduces hepatic gluconeogenesis through down-regulation of PEPCK in an isoform Alpha-dependent manner. Directly regulates STAT1 expression in isoform Alpha-independent manner. The polypeptide is Glucocorticoid receptor (Nr3c1) (Mus musculus (Mouse)).